Reading from the N-terminus, the 169-residue chain is Protein-export protein SecB (169 aa).

Belongs to the SecB family. Homotetramer, a dimer of dimers. One homotetramer interacts with 1 SecA dimer.

It localises to the cytoplasm. Its function is as follows. One of the proteins required for the normal export of preproteins out of the cell cytoplasm. It is a molecular chaperone that binds to a subset of precursor proteins, maintaining them in a translocation-competent state. It also specifically binds to its receptor SecA. This chain is Protein-export protein SecB, found in Alteromonas mediterranea (strain DSM 17117 / CIP 110805 / LMG 28347 / Deep ecotype).